The sequence spans 592 residues: Bifunctional purine biosynthesis protein ATIC (592 aa).

At M1 the chain carries N-acetylmethionine. The 146-residue stretch at 1–146 folds into the MGS-like domain; sequence MASSQLALFS…KNHARVTVVC (146 aa). Residues 1–198 are IMP cyclohydrolase; the sequence is MASSQLALFS…ISDYFRRQYS (198 aa). IMP-binding positions include 12–14, 34–37, 64–67, 101–102, and 125–126; these read SDK, SGGT, RVKT, CN, and DI. The active-site Proton donor/acceptor; for FAICAR cyclization activity is K137. K199 is subject to N6-acetyllysine. The segment at 199–592 is AICAR formyltransferase; the sequence is KGISQMPLRY…AHTDLRLFHH (394 aa). Residues 207 to 208, H267, G316, D339, N431, and R451 each bind 5-amino-1-(5-phospho-beta-D-ribosyl)imidazole-4-carboxamide; that span reads RY. H267 functions as the Proton acceptor; for AICAR formyltransferase activity in the catalytic mechanism. Residue I452 participates in (6R)-10-formyltetrahydrofolate binding. A 5-amino-1-(5-phospho-beta-D-ribosyl)imidazole-4-carboxamide-binding site is contributed by F541. (6R)-10-formyltetrahydrofolate is bound by residues D546 and 565 to 566; that span reads ST. Residue R588 participates in 5-amino-1-(5-phospho-beta-D-ribosyl)imidazole-4-carboxamide binding.

Belongs to the PurH family. In terms of assembly, homodimer. Associates with internalized INSR complexes on Golgi/endosomal membranes. Interacts with INSR; ATIC together with PRKAA2/AMPK2 and HACD3/PTPLAD1 is proposed to be part of a signaling network regulating INSR autophosphorylation and endocytosis. In terms of tissue distribution, expressed in liver.

It localises to the cytoplasm. Its subcellular location is the cytosol. The enzyme catalyses (6R)-10-formyltetrahydrofolate + 5-amino-1-(5-phospho-beta-D-ribosyl)imidazole-4-carboxamide = 5-formamido-1-(5-phospho-D-ribosyl)imidazole-4-carboxamide + (6S)-5,6,7,8-tetrahydrofolate. The catalysed reaction is 10-formyldihydrofolate + 5-amino-1-(5-phospho-beta-D-ribosyl)imidazole-4-carboxamide = 5-formamido-1-(5-phospho-D-ribosyl)imidazole-4-carboxamide + 7,8-dihydrofolate. It catalyses the reaction IMP + H2O = 5-formamido-1-(5-phospho-D-ribosyl)imidazole-4-carboxamide. It functions in the pathway purine metabolism; IMP biosynthesis via de novo pathway; 5-formamido-1-(5-phospho-D-ribosyl)imidazole-4-carboxamide from 5-amino-1-(5-phospho-D-ribosyl)imidazole-4-carboxamide (10-formyl THF route): step 1/1. Its pathway is purine metabolism; IMP biosynthesis via de novo pathway; IMP from 5-formamido-1-(5-phospho-D-ribosyl)imidazole-4-carboxamide: step 1/1. AMP and XMP inhibit AICAR formyltransferase activity. Functionally, bifunctional enzyme that catalyzes the last two steps of purine biosynthesis. Acts as a transformylase that incorporates a formyl group to the AMP analog AICAR (5-amino-1-(5-phospho-beta-D-ribosyl)imidazole-4-carboxamide) to produce the intermediate formyl-AICAR (FAICAR). Can use both 10-formyldihydrofolate and 10-formyltetrahydrofolate as the formyl donor in this reaction. Also catalyzes the cyclization of FAICAR to inosine monophosphate (IMP). Promotes insulin receptor/INSR autophosphorylation and is involved in INSR internalization. This Rattus norvegicus (Rat) protein is Bifunctional purine biosynthesis protein ATIC (Atic).